Consider the following 192-residue polypeptide: Probable nicotinate-nucleotide adenylyltransferase (192 aa).

The protein belongs to the NadD family.

The catalysed reaction is nicotinate beta-D-ribonucleotide + ATP + H(+) = deamido-NAD(+) + diphosphate. It functions in the pathway cofactor biosynthesis; NAD(+) biosynthesis; deamido-NAD(+) from nicotinate D-ribonucleotide: step 1/1. Its function is as follows. Catalyzes the reversible adenylation of nicotinate mononucleotide (NaMN) to nicotinic acid adenine dinucleotide (NaAD). This is Probable nicotinate-nucleotide adenylyltransferase from Shouchella clausii (strain KSM-K16) (Alkalihalobacillus clausii).